We begin with the raw amino-acid sequence, 376 residues long: Bifunctional enzyme IspD/IspF (376 aa).

Residues 1 to 220 are 2-C-methyl-D-erythritol 4-phosphate cytidylyltransferase; that stretch reads MRIAAILVAG…RSMSISMIPR (220 aa). The tract at residues 220–376 is 2-C-methyl-D-erythritol 2,4-cyclodiphosphate synthase; sequence RIGTGYDVHA…QAAVIIMIPA (157 aa). A divalent metal cation is bound by residues D226 and H228. 4-CDP-2-C-methyl-D-erythritol 2-phosphate is bound by residues 226 to 228 and 252 to 253; these read DVH and HS. H260 serves as a coordination point for a divalent metal cation. Residues 274 to 276, 350 to 353, F357, and R360 contribute to the 4-CDP-2-C-methyl-D-erythritol 2-phosphate site; these read DIG and TTSE.

It in the N-terminal section; belongs to the IspD/TarI cytidylyltransferase family. IspD subfamily. The protein in the C-terminal section; belongs to the IspF family. Requires a divalent metal cation as cofactor.

It catalyses the reaction 2-C-methyl-D-erythritol 4-phosphate + CTP + H(+) = 4-CDP-2-C-methyl-D-erythritol + diphosphate. The enzyme catalyses 4-CDP-2-C-methyl-D-erythritol 2-phosphate = 2-C-methyl-D-erythritol 2,4-cyclic diphosphate + CMP. It functions in the pathway isoprenoid biosynthesis; isopentenyl diphosphate biosynthesis via DXP pathway; isopentenyl diphosphate from 1-deoxy-D-xylulose 5-phosphate: step 2/6. Its pathway is isoprenoid biosynthesis; isopentenyl diphosphate biosynthesis via DXP pathway; isopentenyl diphosphate from 1-deoxy-D-xylulose 5-phosphate: step 4/6. In terms of biological role, bifunctional enzyme that catalyzes the formation of 4-diphosphocytidyl-2-C-methyl-D-erythritol from CTP and 2-C-methyl-D-erythritol 4-phosphate (MEP) (IspD), and catalyzes the conversion of 4-diphosphocytidyl-2-C-methyl-D-erythritol 2-phosphate (CDP-ME2P) to 2-C-methyl-D-erythritol 2,4-cyclodiphosphate (ME-CPP) with a corresponding release of cytidine 5-monophosphate (CMP) (IspF). This chain is Bifunctional enzyme IspD/IspF, found in Granulibacter bethesdensis (strain ATCC BAA-1260 / CGDNIH1).